A 157-amino-acid chain; its full sequence is Crossover junction endodeoxyribonuclease RuvC (157 aa).

Residues D7, E67, and D140 contribute to the active site. Mg(2+) contacts are provided by D7, E67, and D140.

The protein belongs to the RuvC family. Homodimer which binds Holliday junction (HJ) DNA. The HJ becomes 2-fold symmetrical on binding to RuvC with unstacked arms; it has a different conformation from HJ DNA in complex with RuvA. In the full resolvosome a probable DNA-RuvA(4)-RuvB(12)-RuvC(2) complex forms which resolves the HJ. Requires Mg(2+) as cofactor.

Its subcellular location is the cytoplasm. It carries out the reaction Endonucleolytic cleavage at a junction such as a reciprocal single-stranded crossover between two homologous DNA duplexes (Holliday junction).. Its function is as follows. The RuvA-RuvB-RuvC complex processes Holliday junction (HJ) DNA during genetic recombination and DNA repair. Endonuclease that resolves HJ intermediates. Cleaves cruciform DNA by making single-stranded nicks across the HJ at symmetrical positions within the homologous arms, yielding a 5'-phosphate and a 3'-hydroxyl group; requires a central core of homology in the junction. The consensus cleavage sequence is 5'-(A/T)TT(C/G)-3'. Cleavage occurs on the 3'-side of the TT dinucleotide at the point of strand exchange. HJ branch migration catalyzed by RuvA-RuvB allows RuvC to scan DNA until it finds its consensus sequence, where it cleaves and resolves the cruciform DNA. In Rickettsia typhi (strain ATCC VR-144 / Wilmington), this protein is Crossover junction endodeoxyribonuclease RuvC.